Consider the following 316-residue polypeptide: 4-hydroxy-3-methylbut-2-enyl diphosphate reductase (316 aa).

C12 contributes to the [4Fe-4S] cluster binding site. (2E)-4-hydroxy-3-methylbut-2-enyl diphosphate contacts are provided by H41 and H74. 2 residues coordinate dimethylallyl diphosphate: H41 and H74. Residues H41 and H74 each contribute to the isopentenyl diphosphate site. [4Fe-4S] cluster is bound at residue C96. H124 contributes to the (2E)-4-hydroxy-3-methylbut-2-enyl diphosphate binding site. H124 lines the dimethylallyl diphosphate pocket. Position 124 (H124) interacts with isopentenyl diphosphate. The Proton donor role is filled by E126. Residue T167 coordinates (2E)-4-hydroxy-3-methylbut-2-enyl diphosphate. C197 contacts [4Fe-4S] cluster. The (2E)-4-hydroxy-3-methylbut-2-enyl diphosphate site is built by S225, S226, N227, and S269. S225, S226, N227, and S269 together coordinate dimethylallyl diphosphate. S225, S226, N227, and S269 together coordinate isopentenyl diphosphate.

It belongs to the IspH family. Homodimer. It depends on [4Fe-4S] cluster as a cofactor.

It carries out the reaction isopentenyl diphosphate + 2 oxidized [2Fe-2S]-[ferredoxin] + H2O = (2E)-4-hydroxy-3-methylbut-2-enyl diphosphate + 2 reduced [2Fe-2S]-[ferredoxin] + 2 H(+). The catalysed reaction is dimethylallyl diphosphate + 2 oxidized [2Fe-2S]-[ferredoxin] + H2O = (2E)-4-hydroxy-3-methylbut-2-enyl diphosphate + 2 reduced [2Fe-2S]-[ferredoxin] + 2 H(+). It participates in isoprenoid biosynthesis; dimethylallyl diphosphate biosynthesis; dimethylallyl diphosphate from (2E)-4-hydroxy-3-methylbutenyl diphosphate: step 1/1. It functions in the pathway isoprenoid biosynthesis; isopentenyl diphosphate biosynthesis via DXP pathway; isopentenyl diphosphate from 1-deoxy-D-xylulose 5-phosphate: step 6/6. Functionally, catalyzes the conversion of 1-hydroxy-2-methyl-2-(E)-butenyl 4-diphosphate (HMBPP) into a mixture of isopentenyl diphosphate (IPP) and dimethylallyl diphosphate (DMAPP). Acts in the terminal step of the DOXP/MEP pathway for isoprenoid precursor biosynthesis. In Cronobacter sakazakii (strain ATCC BAA-894) (Enterobacter sakazakii), this protein is 4-hydroxy-3-methylbut-2-enyl diphosphate reductase.